A 295-amino-acid polypeptide reads, in one-letter code: Virginiamycin B lyase (295 aa).

Position 228 (His228) interacts with substrate. Position 268 (Glu268) interacts with Mg(2+). The Proton acceptor role is filled by His270. Glu285 contacts Mg(2+).

This sequence belongs to the Vgb family. In terms of assembly, monomer. Requires Mg(2+) as cofactor.

Its function is as follows. Inactivates the type B streptogramin antibiotics by linearizing the lactone ring at the ester linkage, generating a free phenylglycine carboxylate and converting the threonyl moiety into 2-amino-butenoic acid. The sequence is that of Virginiamycin B lyase from Clostridium beijerinckii (strain ATCC 51743 / NCIMB 8052) (Clostridium acetobutylicum).